The following is a 252-amino-acid chain: Chitooligosaccharide deacetylase (252 aa).

The Mg(2+) site is built by histidine 61 and histidine 125.

This sequence belongs to the YdjC deacetylase family. ChbG subfamily. As to quaternary structure, homodimer. Mg(2+) is required as a cofactor.

Its subcellular location is the cytoplasm. It catalyses the reaction N,N'-diacetylchitobiose + H2O = N-acetyl-beta-D-glucosaminyl-(1-&gt;4)-D-glucosamine + acetate. The catalysed reaction is diacetylchitobiose-6'-phosphate + H2O = N'-monoacetylchitobiose-6'-phosphate + acetate. The protein operates within glycan degradation; chitin degradation. Functionally, involved in the degradation of chitin. ChbG is essential for growth on the acetylated chitooligosaccharides chitobiose and chitotriose but is dispensable for growth on cellobiose and chitosan dimer, the deacetylated form of chitobiose. Deacetylation of chitobiose-6-P and chitotriose-6-P is necessary for both the activation of the chb promoter by the regulatory protein ChbR and the hydrolysis of phosphorylated beta-glucosides by the phospho-beta-glucosidase ChbF. Catalyzes the removal of only one acetyl group from chitobiose-6-P to yield monoacetylchitobiose-6-P, the inducer of ChbR and the substrate of ChbF. The polypeptide is Chitooligosaccharide deacetylase (Shigella flexneri serotype 5b (strain 8401)).